Consider the following 266-residue polypeptide: Energy-coupling factor transporter transmembrane protein EcfT (266 aa).

Transmembrane regions (helical) follow at residues 26-46 (VIAT…RSVT), 47-67 (LAGL…HYIL), 69-89 (GIKP…LSTP), 116-136 (LIWL…IALT), 151-171 (LPVH…PTLI), 192-212 (SLVA…LSAF), and 246-266 (YAVT…KKAL).

The protein belongs to the energy-coupling factor EcfT family. In terms of assembly, forms a stable energy-coupling factor (ECF) transporter complex composed of 2 membrane-embedded substrate-binding proteins (S component), 2 ATP-binding proteins (A component) and 2 transmembrane proteins (T component). May be able to interact with more than 1 S component at a time.

The protein localises to the cell membrane. Its function is as follows. Transmembrane (T) component of an energy-coupling factor (ECF) ABC-transporter complex. Unlike classic ABC transporters this ECF transporter provides the energy necessary to transport a number of different substrates. In Heliobacterium modesticaldum (strain ATCC 51547 / Ice1), this protein is Energy-coupling factor transporter transmembrane protein EcfT.